The sequence spans 481 residues: Protein FAM83E (481 aa).

Residues 1-296 (MAASQLAALE…LYAASRPLSA (296 aa)) are DUF1669. The interval 351–481 (KQETPTTTGP…ASGSGSGRRR (131 aa)) is disordered. Residues 371 to 385 (RTRTTSGPPTRPSRS) show a composition bias toward low complexity. 2 stretches are compositionally biased toward polar residues: residues 391–400 (RLSQLSGSSD) and 465–474 (NATTSDWASG).

This sequence belongs to the FAM83 family. As to quaternary structure, directly interacts (via DUF1669) with CSNK1A1, CSNK1A1L, CSNK1D and CSNK1E. May interact with RAF1.

The protein localises to the cytoplasm. It is found in the perinuclear region. In terms of biological role, may play a role in MAPK signaling. The sequence is that of Protein FAM83E from Mus musculus (Mouse).